The primary structure comprises 335 residues: Mitochondrial amidoxime reducing component 2 (335 aa).

The transit peptide at 1–35 directs the protein to the mitochondrion; the sequence is MGASSSSALARLGLPAQARPRWLGVAVLGLAAVAL. Glycyl lysine isopeptide (Lys-Gly) (interchain with G-Cter in ubiquitin) cross-links involve residues K59, K138, and K144. K156 carries the post-translational modification N6-acetyllysine; alternate. K156 is covalently cross-linked (Glycyl lysine isopeptide (Lys-Gly) (interchain with G-Cter in ubiquitin); alternate). Residues K173, K187, K287, and K294 each participate in a glycyl lysine isopeptide (Lys-Gly) (interchain with G-Cter in ubiquitin) cross-link. The MOSC domain maps to 188–334; sequence GRTSRKLLPT…LRVGDPVYRM (147 aa).

As to quaternary structure, component of a complex composed of cytochrome b5, NADH-cytochrome b5 reductase (CYB5R3) and MTARC2. It depends on Mo-molybdopterin as a cofactor. Post-translationally, ubiquitinated by PRKN during mitophagy, leading to its degradation and enhancement of mitophagy. Deubiquitinated by USP30.

The protein resides in the mitochondrion outer membrane. Its subcellular location is the peroxisome. It carries out the reaction N(omega)-hydroxy-L-arginine + 2 Fe(II)-[cytochrome b5] + 2 H(+) = L-arginine + 2 Fe(III)-[cytochrome b5] + H2O. Functionally, catalyzes the reduction of N-oxygenated molecules, acting as a counterpart of cytochrome P450 and flavin-containing monooxygenases in metabolic cycles. As a component of prodrug-converting system, reduces a multitude of N-hydroxylated prodrugs particularly amidoximes, leading to increased drug bioavailability. May be involved in mitochondrial N(omega)-hydroxy-L-arginine (NOHA) reduction, regulating endogenous nitric oxide levels and biosynthesis. Postulated to cleave the N-OH bond of N-hydroxylated substrates in concert with electron transfer from NADH to cytochrome b5 reductase then to cytochrome b5, the ultimate electron donor that primes the active site for substrate reduction. The chain is Mitochondrial amidoxime reducing component 2 (MTARC2) from Macaca fascicularis (Crab-eating macaque).